The sequence spans 527 residues: GMP synthase [glutamine-hydrolyzing] (527 aa).

One can recognise a Glutamine amidotransferase type-1 domain in the interval 4–202 (KILILDFGSQ…VLKICGAKPD (199 aa)). Cys81 serves as the catalytic Nucleophile. Residues His176 and Glu178 contribute to the active site. A GMPS ATP-PPase domain is found at 203-395 (WEMGNYIDEA…LGLPPSMVYR (193 aa)). 230-236 (SGGVDSS) lines the ATP pocket.

As to quaternary structure, homodimer.

It carries out the reaction XMP + L-glutamine + ATP + H2O = GMP + L-glutamate + AMP + diphosphate + 2 H(+). It participates in purine metabolism; GMP biosynthesis; GMP from XMP (L-Gln route): step 1/1. Its function is as follows. Catalyzes the synthesis of GMP from XMP. In Paraburkholderia phymatum (strain DSM 17167 / CIP 108236 / LMG 21445 / STM815) (Burkholderia phymatum), this protein is GMP synthase [glutamine-hydrolyzing].